A 469-amino-acid polypeptide reads, in one-letter code: Crinkler effector protein 1 (469 aa).

The first 17 residues, 1–17, serve as a signal peptide directing secretion; that stretch reads MSITLLCLIKGNTLANA. The interval 18–57 is LQLFLAK-like domain; the sequence is FPVDIDKDQLVGHLKKVIKAEQPQTFANVDAKDLKLWRVP. The tract at residues 58–96 is DWL domain; sequence ISDDHDDQLRNLSLEDSDELLAIRKISKYFPDSPPEECI. A glycan (N-linked (GlcNAc...) asparagine) is linked at Asn68. The short motif at 97–103 is the HVLVXXP motif element; the sequence is HVLVEPP. N-linked (GlcNAc...) asparagine glycosylation is found at Asn126, Asn181, and Asn248.

The protein belongs to the Crinkler effector family. Homodimer.

Its subcellular location is the secreted. The protein localises to the host nucleus. Its function is as follows. Effector that participates in the arbuscule development step of the symbiosis. Arbuscular mycorrhizal (AM) symbiosis is one of the most prominent and beneficial plant-microbe interactions that facilitates mineral nutrition and confers tolerance to biotic and abiotic stresses. Is not involved in cell death processes. In Rhizophagus irregularis (strain DAOM 181602 / DAOM 197198 / MUCL 43194) (Arbuscular mycorrhizal fungus), this protein is Crinkler effector protein 1.